The chain runs to 722 residues: Bifunctional UDP-N-acetylglucosamine 2-epimerase/N-acetylmannosamine kinase (722 aa).

Residues R19, S23, R113, H220, and N253 each coordinate UDP. Positions 259, 271, 280, and 281 each coordinate CMP-N-acetyl-beta-neuraminate. UDP is bound by residues V282, S301, S302, E307, and R321. The segment at 406–722 (TLSALAVDLG…VLDYTTRRIY (317 aa)) is N-acetylmannosamine kinase. D413 serves as a coordination point for Mg(2+). An an N-acyl-D-mannosamine 6-phosphate-binding site is contributed by G416. 3 residues coordinate ADP: T417, N418, and R420. The an N-acyl-D-mannosamine 6-phosphate site is built by G476, R477, T489, N516, D517, and G545. G476, R477, T489, N516, and D517 together coordinate an N-acyl-D-mannosamine. The active site involves D517. E566 and H569 together coordinate an N-acyl-D-mannosamine. Residue H569 coordinates an N-acyl-D-mannosamine 6-phosphate. H569, C579, C581, and C586 together coordinate Zn(2+). E588 serves as a coordination point for an N-acyl-D-mannosamine 6-phosphate. E588 contacts an N-acyl-D-mannosamine.

In the N-terminal section; belongs to the UDP-N-acetylglucosamine 2-epimerase family. This sequence in the C-terminal section; belongs to the ROK (NagC/XylR) family. Homodimer. Homotetramer. Homohexamer. The hexameric form exhibits both enzyme activities, whereas the dimeric form only catalyzes the phosphorylation of N-acyl-D-mannosamine. Post-translationally, phosphorylated. Phosphorylation by PKC activates the UDP-N-acetylglucosamine 2-epimerase activity. Highest expression in liver and placenta. Also found in heart, brain, lung, kidney, skeletal muscle and pancreas. Isoform 1 is expressed in heart, brain, kidney, liver, placenta, lung, spleen, pancreas, skeletal muscle and colon. Isoform 2 is expressed mainly in placenta, but also in brain, kidney, liver, lung, pancreas and colon. Isoform 3 is expressed at low level in kidney, liver, placenta and colon.

The protein resides in the cytoplasm. Its subcellular location is the cytosol. The catalysed reaction is UDP-N-acetyl-alpha-D-glucosamine + H2O = aldehydo-N-acetyl-D-mannosamine + UDP + H(+). It carries out the reaction an N-acyl-D-mannosamine + ATP = an N-acyl-D-mannosamine 6-phosphate + ADP + H(+). It functions in the pathway amino-sugar metabolism; N-acetylneuraminate biosynthesis. Its activity is regulated as follows. The UDP-N-acetylglucosamine 2-epimerase activity, in contrast to the N-acetylmannosamine kinase activity, exhibits allosteric regulation by cytidine monophosphate-N-acetylneuraminic acid (CMP-Neu5Ac), the end product of neuraminic acid biosynthesis. Moreover, the activity is contingent upon the oligomeric state of the enzyme. The monomeric form is inactive, while the dimeric form selectively catalyzes the phosphorylation of N-acetylmannosamine. The hexameric form, on the other hand, demonstrates full proficiency in both enzyme activities. Furthermore, the UDP-N-acetylglucosamine 2-epimerase activity is increased by PKC-mediated phosphorylation. Functionally, bifunctional enzyme that possesses both UDP-N-acetylglucosamine 2-epimerase and N-acetylmannosamine kinase activities, and serves as the initiator of the biosynthetic pathway leading to the production of N-acetylneuraminic acid (NeuAc), a critical precursor in the synthesis of sialic acids. By catalyzing this pivotal and rate-limiting step in sialic acid biosynthesis, this enzyme assumes a pivotal role in governing the regulation of cell surface sialylation, playing a role in embryonic angiogenesis. Sialic acids represent a category of negatively charged sugars that reside on the surface of cells as terminal components of glycoconjugates and mediate important functions in various cellular processes, including cell adhesion, signal transduction, and cellular recognition. The protein is Bifunctional UDP-N-acetylglucosamine 2-epimerase/N-acetylmannosamine kinase of Homo sapiens (Human).